Here is a 352-residue protein sequence, read N- to C-terminus: Very-long-chain 3-oxoacyl-CoA reductase (352 aa).

The chain crosses the membrane as a helical span at residues 20–40; sequence TLWFIFIFGLLKLVPFALRFL. Residues valine 66, aspartate 120, asparagine 147, tyrosine 228, lysine 232, valine 261, and serine 263 each contribute to the NADP(+) site. The Proton donor role is filled by tyrosine 228. Lysine 232 acts as the Lowers pKa of active site Tyr in catalysis.

It belongs to the short-chain dehydrogenases/reductases (SDR) family.

The protein localises to the endoplasmic reticulum membrane. It catalyses the reaction a very-long-chain (3R)-3-hydroxyacyl-CoA + NADP(+) = a very-long-chain 3-oxoacyl-CoA + NADPH + H(+). Its pathway is lipid metabolism; fatty acid biosynthesis. Its function is as follows. Component of the microsomal membrane bound fatty acid elongation system, which produces the 26-carbon very long-chain fatty acids (VLCFA) from palmitate. Catalyzes the reduction of the 3-ketoacyl-CoA intermediate that is formed in each cycle of fatty acid elongation. VLCFAs serve as precursors for ceramide and sphingolipids. The chain is Very-long-chain 3-oxoacyl-CoA reductase from Candida glabrata (strain ATCC 2001 / BCRC 20586 / JCM 3761 / NBRC 0622 / NRRL Y-65 / CBS 138) (Yeast).